We begin with the raw amino-acid sequence, 487 residues long: Sodium-coupled neutral amino acid symporter 1 (487 aa).

Topologically, residues 1 to 74 (MMHFKSGLEL…EYIPGTTSLG (74 aa)) are cytoplasmic. Position 6 is a phosphoserine (serine 6). Residue threonine 11 is modified to Phosphothreonine. A phosphoserine mark is found at serine 25, serine 28, serine 49, and serine 52. Phosphothreonine is present on threonine 54. Serine 56 carries the post-translational modification Phosphoserine. Residues 75–97 (MSVFNLSNAIMGSGILGLAFALA) form a helical membrane-spanning segment. Residues 98–112 (NTGILLFLVLLTSVT) lie on the Extracellular side of the membrane. Residues 113 to 133 (LLSIYSINLLLICSKETGCMV) form a helical membrane-spanning segment. Residues 134–147 (YEKLGEQVFGTTGK) lie on the Cytoplasmic side of the membrane. The helical transmembrane segment at 148–168 (FVIFGATSLQNTGAMLSYLFI) threads the bilayer. Residues 169-188 (VKNELPSAIKFLMGKEETFS) are Extracellular-facing. A helical transmembrane segment spans residues 189-211 (AWYVDGRVLVVIVTFGIILPLCL). At 212-216 (LKNLG) the chain is on the cytoplasmic side. Residues 217–237 (YLGYTSGFSLSCMVFFLIVVI) form a helical membrane-spanning segment. Residues 238-275 (YKKFQIPCIVPELNSTISANSTNADTCTPKYVTLNSKT) lie on the Extracellular side of the membrane. The cysteines at positions 245 and 264 are disulfide-linked. 2 N-linked (GlcNAc...) asparagine glycosylation sites follow: asparagine 251 and asparagine 257. Residues 276–296 (VYALPTIAFAFVCHPSVLPIY) traverse the membrane as a helical segment. Over 297-312 (SELKDRSQKKMQMVSN) the chain is Cytoplasmic. A helical membrane pass occupies residues 313–333 (ISFFAMFVMYFLTAIFGYLTF). Topologically, residues 334 to 350 (YDNVQSDLLHKYQGKDD) are extracellular. Residues 351-371 (ILILTVRLAVIVAVILTVPVL) traverse the membrane as a helical segment. Residues 372-393 (FFTVRSSLFELAKKTKFNLCRH) lie on the Cytoplasmic side of the membrane. The chain crosses the membrane as a helical span at residues 394 to 414 (TVVTCILLVVINLLVISIPSM). The Extracellular portion of the chain corresponds to 415 to 416 (KD). Residues 417 to 437 (IFGVVGVTSANMLIFILPSSL) form a helical membrane-spanning segment. At 438-452 (YLKITDQDGDKGTQR) the chain is on the cytoplasmic side. The chain crosses the membrane as a helical span at residues 453 to 473 (IWAALFLGLGVLFSLVSIPLV). Topologically, residues 474 to 487 (IYDWACSSSSDEGH) are extracellular.

The protein belongs to the amino acid/polyamine transporter 2 family. In terms of processing, N-glycosylation plays an important role in the L-glutamine transport.

It is found in the cell membrane. The enzyme catalyses L-glutamine(in) + Na(+)(in) = L-glutamine(out) + Na(+)(out). The catalysed reaction is L-alanine(in) + Na(+)(in) = L-alanine(out) + Na(+)(out). It carries out the reaction L-asparagine(in) + Na(+)(in) = L-asparagine(out) + Na(+)(out). It catalyses the reaction L-histidine(in) + Na(+)(in) = L-histidine(out) + Na(+)(out). The enzyme catalyses L-serine(in) + Na(+)(in) = L-serine(out) + Na(+)(out). The catalysed reaction is L-cysteine(in) + Na(+)(in) = L-cysteine(out) + Na(+)(out). It carries out the reaction L-methionine(in) + Na(+)(in) = L-methionine(out) + Na(+)(out). It catalyses the reaction glycine(in) + Na(+)(in) = glycine(out) + Na(+)(out). The enzyme catalyses L-threonine(in) + Na(+)(in) = L-threonine(out) + Na(+)(out). The catalysed reaction is L-proline(in) + Na(+)(in) = L-proline(out) + Na(+)(out). With respect to regulation, inhibited by alpha-(methylamino)isobutyric acid (MeAIB). Inhibited by lithium, potassium, choline ions, N-methylglucamine. The pH dependence has an allosteric effect on the transport. Symporter that cotransports short-chain neutral amino acids and sodium ions from the extraccellular to the intracellular side of the cell membrane. The transport is elctrogenic, pH dependent and driven by the Na(+) electrochemical gradient. Participates in the astroglia-derived glutamine transport into GABAergic interneurons for neurotransmitter GABA de novo synthesis. May also contributes to amino acid transport in placental trophoblast. Regulates synaptic plasticity. The sequence is that of Sodium-coupled neutral amino acid symporter 1 from Pongo abelii (Sumatran orangutan).